The sequence spans 547 residues: Chaperonin GroEL (547 aa).

ATP-binding positions include 30 to 33, K51, 87 to 91, G415, and D495; these read TLGP and DGTTT.

It belongs to the chaperonin (HSP60) family. Forms a cylinder of 14 subunits composed of two heptameric rings stacked back-to-back. Interacts with the co-chaperonin GroES.

Its subcellular location is the cytoplasm. It catalyses the reaction ATP + H2O + a folded polypeptide = ADP + phosphate + an unfolded polypeptide.. Together with its co-chaperonin GroES, plays an essential role in assisting protein folding. The GroEL-GroES system forms a nano-cage that allows encapsulation of the non-native substrate proteins and provides a physical environment optimized to promote and accelerate protein folding. This chain is Chaperonin GroEL, found in Bartonella quintana (strain Toulouse) (Rochalimaea quintana).